The primary structure comprises 514 residues: ATP synthase subunit alpha (514 aa).

170–177 (GDRQIGKT) serves as a coordination point for ATP.

The protein belongs to the ATPase alpha/beta chains family. In terms of assembly, F-type ATPases have 2 components, CF(1) - the catalytic core - and CF(0) - the membrane proton channel. CF(1) has five subunits: alpha(3), beta(3), gamma(1), delta(1), epsilon(1). CF(0) has three main subunits: a(1), b(2) and c(9-12). The alpha and beta chains form an alternating ring which encloses part of the gamma chain. CF(1) is attached to CF(0) by a central stalk formed by the gamma and epsilon chains, while a peripheral stalk is formed by the delta and b chains.

It localises to the cell inner membrane. It catalyses the reaction ATP + H2O + 4 H(+)(in) = ADP + phosphate + 5 H(+)(out). In terms of biological role, produces ATP from ADP in the presence of a proton gradient across the membrane. The alpha chain is a regulatory subunit. This Pseudomonas syringae pv. tomato (strain ATCC BAA-871 / DC3000) protein is ATP synthase subunit alpha.